The chain runs to 73 residues: Putative membrane protein insertion efficiency factor (73 aa).

It belongs to the UPF0161 family.

The protein resides in the cell inner membrane. Could be involved in insertion of integral membrane proteins into the membrane. The sequence is that of Putative membrane protein insertion efficiency factor from Neisseria meningitidis serogroup C / serotype 2a (strain ATCC 700532 / DSM 15464 / FAM18).